We begin with the raw amino-acid sequence, 232 residues long: MSLFNTVRNTIVPVHKEGYPFVAAFFVASLVLGWIFKPLFWIGMIFTLWCAYFFRDPERVTPQDDDLVISPADGKVSAIQMVTPPAELDLGSEPMLRISVFMNVFNCHVNRAPMRGRIVSINYRSGSFVNAELDKASEDNERNGLVIETRHGQIGVVQIAGLVARRILCWANTNEPLDAGERFGLIRFGSRLDVFLPAGAAPRVSLGQTAIAGETVIAEFASAKGPVISRHS.

The Schiff-base intermediate with substrate; via pyruvic acid role is filled by Ser-190. Ser-190 is subject to Pyruvic acid (Ser); by autocatalysis.

The protein belongs to the phosphatidylserine decarboxylase family. PSD-A subfamily. As to quaternary structure, heterodimer of a large membrane-associated beta subunit and a small pyruvoyl-containing alpha subunit. The cofactor is pyruvate. Is synthesized initially as an inactive proenzyme. Formation of the active enzyme involves a self-maturation process in which the active site pyruvoyl group is generated from an internal serine residue via an autocatalytic post-translational modification. Two non-identical subunits are generated from the proenzyme in this reaction, and the pyruvate is formed at the N-terminus of the alpha chain, which is derived from the carboxyl end of the proenzyme. The post-translation cleavage follows an unusual pathway, termed non-hydrolytic serinolysis, in which the side chain hydroxyl group of the serine supplies its oxygen atom to form the C-terminus of the beta chain, while the remainder of the serine residue undergoes an oxidative deamination to produce ammonia and the pyruvoyl prosthetic group on the alpha chain.

The protein localises to the cell membrane. It catalyses the reaction a 1,2-diacyl-sn-glycero-3-phospho-L-serine + H(+) = a 1,2-diacyl-sn-glycero-3-phosphoethanolamine + CO2. Its pathway is phospholipid metabolism; phosphatidylethanolamine biosynthesis; phosphatidylethanolamine from CDP-diacylglycerol: step 2/2. Functionally, catalyzes the formation of phosphatidylethanolamine (PtdEtn) from phosphatidylserine (PtdSer). The protein is Phosphatidylserine decarboxylase proenzyme of Rhizobium etli (strain ATCC 51251 / DSM 11541 / JCM 21823 / NBRC 15573 / CFN 42).